A 277-amino-acid chain; its full sequence is Shikimate dehydrogenase (NADP(+)) (277 aa).

Shikimate is bound by residues 15-17 and Thr62; that span reads SLS. Lys66 (proton acceptor) is an active-site residue. Positions 87 and 102 each coordinate shikimate. Residues 127-131, 151-156, and Ile219 each bind NADP(+); these read GAGGA and NRTVDK. Tyr221 lines the shikimate pocket. An NADP(+)-binding site is contributed by Gly242.

Belongs to the shikimate dehydrogenase family. In terms of assembly, homodimer.

The enzyme catalyses shikimate + NADP(+) = 3-dehydroshikimate + NADPH + H(+). It participates in metabolic intermediate biosynthesis; chorismate biosynthesis; chorismate from D-erythrose 4-phosphate and phosphoenolpyruvate: step 4/7. Its function is as follows. Involved in the biosynthesis of the chorismate, which leads to the biosynthesis of aromatic amino acids. Catalyzes the reversible NADPH linked reduction of 3-dehydroshikimate (DHSA) to yield shikimate (SA). This chain is Shikimate dehydrogenase (NADP(+)), found in Bacillus cereus (strain ATCC 10987 / NRS 248).